Reading from the N-terminus, the 329-residue chain is CDP-6-deoxy-L-threo-D-glycero-4-hexulose-3-dehydrase reductase (329 aa).

The region spanning 2 to 93 is the 2Fe-2S ferredoxin-type domain; it reads SLNVKLHPSG…ELDVNYYPEL (92 aa). Residues C37, C42, C45, and C75 each contribute to the [2Fe-2S] cluster site. The FAD-binding FR-type domain occupies 98–197; the sequence is KKTYPCKLDS…EGPQGTFFVR (100 aa).

In terms of assembly, monomer.

Its pathway is nucleotide-sugar biosynthesis; CDP-ascarylose biosynthesis. The protein operates within bacterial outer membrane biogenesis; lipopolysaccharide biosynthesis. Participates in the conversion of CDP-6-deoxy-D-glycero-L-threo-4-hexulose to 3,6-dideoxy-D-glycero-D-glycero-4-hexulose together with CDP-6-deoxy-D-glycero-L-threo-4-hexulose-3-dehydrase (E1) in two consecutive steps. The detailed mechanism of E3 is not yet resolved. The sequence is that of CDP-6-deoxy-L-threo-D-glycero-4-hexulose-3-dehydrase reductase (ascD) from Yersinia pseudotuberculosis serotype I (strain IP32953).